Reading from the N-terminus, the 352-residue chain is Chorismate synthase (352 aa).

Arg48 is an NADP(+) binding site. Residues 125–127 (RSS), 237–238 (NA), Gly278, 293–297 (KPTSS), and Arg319 each bind FMN.

The protein belongs to the chorismate synthase family. In terms of assembly, homotetramer. Requires FMNH2 as cofactor.

It catalyses the reaction 5-O-(1-carboxyvinyl)-3-phosphoshikimate = chorismate + phosphate. The protein operates within metabolic intermediate biosynthesis; chorismate biosynthesis; chorismate from D-erythrose 4-phosphate and phosphoenolpyruvate: step 7/7. Its function is as follows. Catalyzes the anti-1,4-elimination of the C-3 phosphate and the C-6 proR hydrogen from 5-enolpyruvylshikimate-3-phosphate (EPSP) to yield chorismate, which is the branch point compound that serves as the starting substrate for the three terminal pathways of aromatic amino acid biosynthesis. This reaction introduces a second double bond into the aromatic ring system. The protein is Chorismate synthase of Francisella tularensis subsp. holarctica (strain FTNF002-00 / FTA).